Consider the following 364-residue polypeptide: DNA replication and repair protein RecF (364 aa).

30-37 contributes to the ATP binding site; the sequence is GNNAQGKT.

Belongs to the RecF family.

The protein localises to the cytoplasm. Its function is as follows. The RecF protein is involved in DNA metabolism; it is required for DNA replication and normal SOS inducibility. RecF binds preferentially to single-stranded, linear DNA. It also seems to bind ATP. In Clostridium botulinum (strain Okra / Type B1), this protein is DNA replication and repair protein RecF.